The chain runs to 352 residues: Probable tyrosine-protein kinase DDB_G0290471 (352 aa).

The Protein kinase domain occupies I51–Y333. Residues L57–V65 and K78 each bind ATP. The active-site Proton acceptor is the D175.

The protein belongs to the protein kinase superfamily. TKL Tyr protein kinase family.

The catalysed reaction is L-tyrosyl-[protein] + ATP = O-phospho-L-tyrosyl-[protein] + ADP + H(+). In Dictyostelium discoideum (Social amoeba), this protein is Probable tyrosine-protein kinase DDB_G0290471.